A 505-amino-acid chain; its full sequence is Probable alpha-L-arabinofuranosidase C (505 aa).

N-linked (GlcNAc...) asparagine glycosylation is found at N152, N181, and N269.

Belongs to the glycosyl hydrolase 51 family.

It localises to the secreted. The catalysed reaction is Hydrolysis of terminal non-reducing alpha-L-arabinofuranoside residues in alpha-L-arabinosides.. It participates in glycan metabolism; L-arabinan degradation. Functionally, alpha-L-arabinofuranosidase involved in the degradation of arabinoxylan, a major component of plant hemicellulose. Acts only on small linear 1,5-alpha-linked L-arabinofuranosyl oligosaccharides. The polypeptide is Probable alpha-L-arabinofuranosidase C (abfC) (Aspergillus niger (strain ATCC MYA-4892 / CBS 513.88 / FGSC A1513)).